The following is a 551-amino-acid chain: Palmdelphin (551 aa).

An N-acetylmethionine modification is found at methionine 1. The stretch at 12–106 (QAITDKRKIQ…LQISANEEVI (95 aa)) forms a coiled coil. Lysine 125 participates in a covalent cross-link: Glycyl lysine isopeptide (Lys-Gly) (interchain with G-Cter in SUMO2). Phosphoserine is present on residues serine 135 and serine 163. Lysine 178 participates in a covalent cross-link: Glycyl lysine isopeptide (Lys-Gly) (interchain with G-Cter in SUMO1); alternate. Lysine 178 is covalently cross-linked (Glycyl lysine isopeptide (Lys-Gly) (interchain with G-Cter in SUMO2); alternate). Residues 247-258 (ERNSKSPTEYHE) show a composition bias toward basic and acidic residues. The segment at 247–267 (ERNSKSPTEYHEPVYANPFCR) is disordered. Threonine 270 is subject to Phosphothreonine. Disordered stretches follow at residues 298–387 (HESE…CSSP) and 452–536 (EDDE…DPSL). Serine 322, serine 350, serine 371, serine 376, serine 385, and serine 386 each carry phosphoserine. Over residues 484 to 495 (KRSEVSPHENTN) the composition is skewed to basic and acidic residues. Serine 498, serine 515, and serine 520 each carry phosphoserine.

It belongs to the paralemmin family. In terms of assembly, interacts with GLUL. Phosphorylated. In terms of tissue distribution, expressed in the brain and the spinal cord. Expressed in the anterior olfactory nucleus, the olfactory tubercle, the nucleus supraopticus, the nucleus of the lateral olfactory tract, the piriform cortex, the cortico-amygdaloid transition zone, the septofimbrial nucleus and the indusium griseum (at protein level).

Its subcellular location is the cytoplasm. It localises to the cell projection. It is found in the dendrite. The protein resides in the dendritic spine. The sequence is that of Palmdelphin (Palmd) from Rattus norvegicus (Rat).